Reading from the N-terminus, the 505-residue chain is Probable cytosol aminopeptidase (505 aa).

Positions 269 and 274 each coordinate Mn(2+). Lysine 281 is an active-site residue. Residues aspartate 292, aspartate 351, and glutamate 353 each contribute to the Mn(2+) site. Arginine 355 is a catalytic residue.

The protein belongs to the peptidase M17 family. Requires Mn(2+) as cofactor.

The protein localises to the cytoplasm. It carries out the reaction Release of an N-terminal amino acid, Xaa-|-Yaa-, in which Xaa is preferably Leu, but may be other amino acids including Pro although not Arg or Lys, and Yaa may be Pro. Amino acid amides and methyl esters are also readily hydrolyzed, but rates on arylamides are exceedingly low.. It catalyses the reaction Release of an N-terminal amino acid, preferentially leucine, but not glutamic or aspartic acids.. Its function is as follows. Presumably involved in the processing and regular turnover of intracellular proteins. Catalyzes the removal of unsubstituted N-terminal amino acids from various peptides. The protein is Probable cytosol aminopeptidase of Rhodococcus opacus (strain B4).